The primary structure comprises 258 residues: Protease HtpX homolog (258 aa).

2 consecutive transmembrane segments (helical) span residues 24 to 44 (VLLFGLIYAILMVVGSILGLG) and 45 to 65 (GPLFYALLGFGVIFLQYLISP). Histidine 146 contacts Zn(2+). Residue glutamate 147 is part of the active site. Histidine 150 serves as a coordination point for Zn(2+). Transmembrane regions (helical) follow at residues 157–177 (IVMTLVSAVPLICYYIFWSTV) and 186–206 (LVGIAALIAYFIGQLIVLFIS). A Zn(2+)-binding site is contributed by glutamate 210.

Belongs to the peptidase M48B family. Zn(2+) is required as a cofactor.

It localises to the cell membrane. The chain is Protease HtpX homolog from Methanothermobacter thermautotrophicus (strain ATCC 29096 / DSM 1053 / JCM 10044 / NBRC 100330 / Delta H) (Methanobacterium thermoautotrophicum).